The following is a 734-amino-acid chain: Photosystem I P700 chlorophyll a apoprotein A2 (734 aa).

8 helical membrane-spanning segments follow: residues 46 to 69 (IFASHFGQLAIIFLWTSGNLFHVA), 135 to 158 (LYTGALFLLFLSAISLIAGWLHLQ), 175 to 199 (LNHHLSGLFGVSSLAWTGHLVHVAI), 273 to 291 (MAHHHLAIAFIFLVAGHMY), 330 to 353 (IHFQLGLALASLGVITSLVAQHMY), 369 to 395 (AALYTHHQYIAGFIMTGAFAHGAIFFI), 417 to 439 (AIKSHLSWASLFLGFHTLGLYVH), and 517 to 535 (FLVHHAIALGLHTTTLILV). Residues Cys559 and Cys568 each coordinate [4Fe-4S] cluster. 2 helical membrane passes run 575-596 (AFYLAVFWMLNTIGWVTFYWHW) and 643-665 (LSVWAWMFLFGHLVWATGFMFLI). Residues His654, Met662, and Tyr670 each contribute to the chlorophyll a site. Trp671 is a binding site for phylloquinone. A helical transmembrane segment spans residues 707–727 (LVGLAHFSVGYIFTYAAFLIA).

This sequence belongs to the PsaA/PsaB family. As to quaternary structure, the PsaA/B heterodimer binds the P700 chlorophyll special pair and subsequent electron acceptors. PSI consists of a core antenna complex that captures photons, and an electron transfer chain that converts photonic excitation into a charge separation. The eukaryotic PSI reaction center is composed of at least 11 subunits. P700 is a chlorophyll a/chlorophyll a' dimer, A0 is one or more chlorophyll a, A1 is one or both phylloquinones and FX is a shared 4Fe-4S iron-sulfur center. serves as cofactor.

It is found in the plastid. It localises to the chloroplast thylakoid membrane. The catalysed reaction is reduced [plastocyanin] + hnu + oxidized [2Fe-2S]-[ferredoxin] = oxidized [plastocyanin] + reduced [2Fe-2S]-[ferredoxin]. Functionally, psaA and PsaB bind P700, the primary electron donor of photosystem I (PSI), as well as the electron acceptors A0, A1 and FX. PSI is a plastocyanin-ferredoxin oxidoreductase, converting photonic excitation into a charge separation, which transfers an electron from the donor P700 chlorophyll pair to the spectroscopically characterized acceptors A0, A1, FX, FA and FB in turn. Oxidized P700 is reduced on the lumenal side of the thylakoid membrane by plastocyanin. The chain is Photosystem I P700 chlorophyll a apoprotein A2 from Chloranthus spicatus (Chulantree).